Consider the following 234-residue polypeptide: Biotin transport ATP-binding protein BioM (234 aa).

The 230-residue stretch at 1-230 (MQAIDIGHVT…YIAAMQALAR (230 aa)) folds into the ABC transporter domain. An ATP-binding site is contributed by 35-42 (GRNGAGKS).

Belongs to the ABC transporter superfamily. As to quaternary structure, part of a biotin transporter holocomplex composed of BioM, BioN and BioY. BioMN complexes can be readily purified, but not BioMY complexes. Only the BioMNY complex has ATPase activity.

It localises to the cell inner membrane. Required for biotin uptake under very low (pM) biotin concentrations but not under higher (nM) concentrations. In Rhodobacter capsulatus (strain ATCC BAA-309 / NBRC 16581 / SB1003), this protein is Biotin transport ATP-binding protein BioM (bioM).